The chain runs to 211 residues: tRNA (guanine-N(7)-)-methyltransferase (211 aa).

4 residues coordinate S-adenosyl-L-methionine: Glu-44, Asp-69, Asp-96, and Asp-118. The active site involves Asp-118. Lys-122 contributes to the substrate binding site. The interaction with RNA stretch occupies residues Lys-124–Arg-129. Substrate contacts are provided by residues Asp-154 and Thr-191–Glu-194.

It belongs to the class I-like SAM-binding methyltransferase superfamily. TrmB family.

It carries out the reaction guanosine(46) in tRNA + S-adenosyl-L-methionine = N(7)-methylguanosine(46) in tRNA + S-adenosyl-L-homocysteine. Its pathway is tRNA modification; N(7)-methylguanine-tRNA biosynthesis. Catalyzes the formation of N(7)-methylguanine at position 46 (m7G46) in tRNA. This is tRNA (guanine-N(7)-)-methyltransferase from Streptococcus pyogenes serotype M18 (strain MGAS8232).